A 28-amino-acid chain; its full sequence is Antibacterial protein LC3 (28 aa).

Antibacterial activity against X.campestris, especially strain G, and P.solacearum PO1. This Bacillus subtilis protein is Antibacterial protein LC3.